We begin with the raw amino-acid sequence, 162 residues long: Photosystem II extrinsic protein V (162 aa).

The signal sequence occupies residues 1–25 (MFKKFSALFTLLFTLCLVNPMLVYS). Heme c is bound by residues Cys-62, Cys-65, His-66, and His-117.

The protein belongs to the cytochrome c family. PsbV subfamily. As to quaternary structure, PSII is composed of 1 copy each of membrane proteins PsbA, PsbB, PsbC, PsbD, PsbE, PsbF, PsbH, PsbI, PsbJ, PsbK, PsbL, PsbM, PsbT, PsbX, PsbY, PsbZ, Psb30/Ycf12, at least 3 peripheral proteins of the oxygen-evolving complex and a large number of cofactors. It forms dimeric complexes. It depends on heme c as a cofactor.

The protein localises to the plastid. It localises to the chloroplast thylakoid membrane. In terms of biological role, one of the extrinsic, lumenal subunits of photosystem II (PSII). PSII is a light-driven water plastoquinone oxidoreductase, using light energy to abstract electrons from H(2)O, generating a proton gradient subsequently used for ATP formation. The extrinsic proteins stabilize the structure of photosystem II oxygen-evolving complex (OEC), the ion environment of oxygen evolution and protect the OEC against heat-induced inactivation. This is Photosystem II extrinsic protein V from Guillardia theta (Cryptophyte).